Reading from the N-terminus, the 288-residue chain is Diaminopimelate epimerase (288 aa).

Substrate contacts are provided by Asn14 and Asn67. Cys76 (proton donor) is an active-site residue. Substrate contacts are provided by residues 77–78 (GN), Asn166, Asn199, and 217–218 (ER). Cys226 serves as the catalytic Proton acceptor. 227-228 (GT) contacts substrate.

It belongs to the diaminopimelate epimerase family. Homodimer.

It is found in the cytoplasm. It carries out the reaction (2S,6S)-2,6-diaminopimelate = meso-2,6-diaminopimelate. It functions in the pathway amino-acid biosynthesis; L-lysine biosynthesis via DAP pathway; DL-2,6-diaminopimelate from LL-2,6-diaminopimelate: step 1/1. Its function is as follows. Catalyzes the stereoinversion of LL-2,6-diaminopimelate (L,L-DAP) to meso-diaminopimelate (meso-DAP), a precursor of L-lysine and an essential component of the bacterial peptidoglycan. This is Diaminopimelate epimerase from Bacillus cereus (strain ATCC 10987 / NRS 248).